Consider the following 143-residue polypeptide: Rheacalcin-2 (143 aa).

3 disulfide bridges follow: cysteine 6/cysteine 17, cysteine 34/cysteine 139, and cysteine 114/cysteine 131. In terms of domain architecture, C-type lectin spans 13 to 140 (FDGRCFGFFP…CSDRKPFICE (128 aa)). Phosphoserine occurs at positions 66 and 68.

The protein localises to the secreted. Its subcellular location is the extracellular space. It is found in the extracellular matrix. This Rhea americana (Greater rhea) protein is Rheacalcin-2.